The primary structure comprises 1087 residues: Error-prone DNA polymerase 3 (1087 aa).

The disordered stretch occupies residues 1040-1064; it reads AGRGDEFAHGSPGSSDTRDKSKPVV.

It belongs to the DNA polymerase type-C family. DnaE2 subfamily.

It is found in the cytoplasm. It carries out the reaction DNA(n) + a 2'-deoxyribonucleoside 5'-triphosphate = DNA(n+1) + diphosphate. Functionally, DNA polymerase involved in damage-induced mutagenesis and translesion synthesis (TLS). It is not the major replicative DNA polymerase. In Agrobacterium fabrum (strain C58 / ATCC 33970) (Agrobacterium tumefaciens (strain C58)), this protein is Error-prone DNA polymerase 3.